Here is a 132-residue protein sequence, read N- to C-terminus: Small ribosomal subunit protein uS8 (132 aa).

Belongs to the universal ribosomal protein uS8 family. As to quaternary structure, part of the 30S ribosomal subunit. Contacts proteins S5 and S12.

One of the primary rRNA binding proteins, it binds directly to 16S rRNA central domain where it helps coordinate assembly of the platform of the 30S subunit. The sequence is that of Small ribosomal subunit protein uS8 from Micrococcus luteus (strain ATCC 4698 / DSM 20030 / JCM 1464 / CCM 169 / CCUG 5858 / IAM 1056 / NBRC 3333 / NCIMB 9278 / NCTC 2665 / VKM Ac-2230) (Micrococcus lysodeikticus).